The primary structure comprises 205 residues: Probable GTP-binding protein EngB (205 aa).

One can recognise an EngB-type G domain in the interval 29–203; that stretch reads QGAEIAFIGR…KAVLSQWFRS (175 aa). GTP-binding positions include 37–44, 64–68, 82–85, 149–152, and 182–184; these read GRSNAGKS, GRTQM, DLPG, TKSD, and FSS. Mg(2+)-binding residues include Ser44 and Thr66.

The protein belongs to the TRAFAC class TrmE-Era-EngA-EngB-Septin-like GTPase superfamily. EngB GTPase family. It depends on Mg(2+) as a cofactor.

Necessary for normal cell division and for the maintenance of normal septation. This Coxiella burnetii (strain RSA 331 / Henzerling II) protein is Probable GTP-binding protein EngB.